A 395-amino-acid chain; its full sequence is Acetate kinase (395 aa).

A Mg(2+)-binding site is contributed by Asn-8. Lys-15 provides a ligand contact to ATP. Arg-89 is a substrate binding site. The Proton donor/acceptor role is filled by Asp-146. ATP contacts are provided by residues 206–210, 281–283, and 329–333; these read HLGNG, DLR, and GIGEN. Glu-382 lines the Mg(2+) pocket.

Belongs to the acetokinase family. Homodimer. Requires Mg(2+) as cofactor. The cofactor is Mn(2+).

It localises to the cytoplasm. The enzyme catalyses acetate + ATP = acetyl phosphate + ADP. It participates in metabolic intermediate biosynthesis; acetyl-CoA biosynthesis; acetyl-CoA from acetate: step 1/2. In terms of biological role, catalyzes the formation of acetyl phosphate from acetate and ATP. Can also catalyze the reverse reaction. The chain is Acetate kinase from Shouchella clausii (strain KSM-K16) (Alkalihalobacillus clausii).